Here is a 413-residue protein sequence, read N- to C-terminus: Clamp protein VP6 (413 aa).

Belongs to the reoviridae clamp protein family. Interacts with capsid proteins VP3, VP4 and VP7.

It localises to the virion. Its function is as follows. Located at the interface of the incomplete T=13 outer capsid and the pseudo T=2 inner capsid, 120 VP6 subunits clamp and stabilize the inner capsid shell. The protein is Clamp protein VP6 (S8) of Ctenopharyngodon idella (Grass carp).